Here is a 500-residue protein sequence, read N- to C-terminus: Na(+)/H(+) antiporter NhaB (500 aa).

13 helical membrane-spanning segments follow: residues 11–31 (HGFL…FLVL), 34–54 (LLLA…EFIF), 58–78 (MALK…ALLL), 96–116 (VILL…LLLF), 121–141 (ILLG…LSAF), 145–165 (FLDA…FYAV), 205–225 (LLMH…VGEP), 241–261 (FLLK…LTCV), 311–331 (ILII…LMVI), 350–370 (FQDA…VAVI), 394–414 (MLYL…VATI), 450–470 (ATPN…APLI), and 477–497 (MVWM…WAVT).

Belongs to the NhaB Na(+)/H(+) (TC 2.A.34) antiporter family.

Its subcellular location is the cell inner membrane. The catalysed reaction is 2 Na(+)(in) + 3 H(+)(out) = 2 Na(+)(out) + 3 H(+)(in). Functionally, na(+)/H(+) antiporter that extrudes sodium in exchange for external protons. This Pseudomonas putida (strain ATCC 700007 / DSM 6899 / JCM 31910 / BCRC 17059 / LMG 24140 / F1) protein is Na(+)/H(+) antiporter NhaB.